A 334-amino-acid chain; its full sequence is MSKRKAPQESPNEGITDFLVELANYERNVNRAIHKYNAYRKAASVIAKYPTKIKSGTEAKKLDGVGAKIAEKIDEFLATGKLRKLEKIRQDDTSSSINFLTRVTGIGPAAARKFFDEGIKTLDDLRNNEHKLNHHQKIGLKHFDDFEKRIPRKEMLQMQEIILDKVNNLDPEYIATVCGSFRRGAESSGDMDILLTHPDFTSESAKQPRLLHQVVQCLEDCNFITDTLVKGDTKFMGVCQLPCESDQDYPYRRIDIRLIPKDQYYCGVLYFTGSDIFNKNMRTHALEKGFTLNEYTLRPLGVTGIAGEPLPIDSEKDIFDYIQWKYREPKDRSE.

Residues Lys-60, Leu-62, and Val-65 each contribute to the K(+) site. 3 residues coordinate Na(+): Lys-60, Leu-62, and Val-65. Lys-72 functions as the Nucleophile; Schiff-base intermediate with DNA; for 5'-dRP lyase activity in the catalytic mechanism. Position 83 is an omega-N-methylarginine; by PRMT6 (Arg-83). K(+) is bound by residues Thr-101, Val-103, and Ile-106. Residues Thr-101, Val-103, and Ile-106 each coordinate Na(+). Arg-149 contacts a 2'-deoxyribonucleoside 5'-triphosphate. An Omega-N-methylarginine; by PRMT6 modification is found at Arg-152. A 2'-deoxyribonucleoside 5'-triphosphate contacts are provided by Ser-180, Arg-183, Gly-189, and Asp-190. The segment at Arg-183–Asp-192 is DNA-binding. The Mg(2+) site is built by Asp-190, Asp-192, and Asp-255.

Belongs to the DNA polymerase type-X family. In terms of assembly, monomer. The cofactor is Mg(2+). Methylation by PRMT6 stimulates the polymerase activity by enhancing DNA binding and processivity. Post-translationally, ubiquitinated: monoubiquitinated by huwe1/arf-bp1. Monoubiquitinated protein is then the target of stub1/chip, which catalyzes polyubiquitination from monoubiquitin, leading to degradation by the proteasome. usp47 mediates the deubiquitination of monoubiquitinated protein, preventing polyubiquitination by STUB1/CHIP and its subsequent degradation.

It is found in the nucleus. The protein resides in the cytoplasm. The enzyme catalyses DNA(n) + a 2'-deoxyribonucleoside 5'-triphosphate = DNA(n+1) + diphosphate. It catalyses the reaction a 5'-end 2'-deoxyribose-2'-deoxyribonucleotide-DNA = (2E,4S)-4-hydroxypenten-2-al-5-phosphate + a 5'-end 5'-phospho-2'-deoxyribonucleoside-DNA + H(+). It carries out the reaction 2'-deoxyribonucleotide-(2'-deoxyribose 5'-phosphate)-2'-deoxyribonucleotide-DNA = a 3'-end 2'-deoxyribonucleotide-(2,3-dehydro-2,3-deoxyribose 5'-phosphate)-DNA + a 5'-end 5'-phospho-2'-deoxyribonucleoside-DNA + H(+). Its function is as follows. Repair polymerase that plays a key role in base-excision repair. During this process, the damaged base is excised by specific DNA glycosylases, the DNA backbone is nicked at the abasic site by an apurinic/apyrimidic (AP) endonuclease, and POLB removes 5'-deoxyribose-phosphate from the preincised AP site acting as a 5'-deoxyribose-phosphate lyase (5'-dRP lyase); through its DNA polymerase activity, it adds one nucleotide to the 3' end of the arising single-nucleotide gap. Conducts 'gap-filling' DNA synthesis in a stepwise distributive fashion rather than in a processive fashion as for other DNA polymerases. It is also able to cleave sugar-phosphate bonds 3' to an intact AP site, acting as an AP lyase. The chain is DNA polymerase beta (polb) from Xenopus laevis (African clawed frog).